Consider the following 147-residue polypeptide: Large ribosomal subunit protein uL15 (147 aa).

The disordered stretch occupies residues Met-1–Pro-57. The span at Pro-10–Gly-21 shows a compositional bias: basic residues. A compositionally biased stretch (gly residues) spans Arg-22–Gln-36. Positions Lys-37–Arg-46 are enriched in basic residues.

The protein belongs to the universal ribosomal protein uL15 family. In terms of assembly, part of the 50S ribosomal subunit.

Its function is as follows. Binds to the 23S rRNA. In Mycoplasmoides gallisepticum (strain R(low / passage 15 / clone 2)) (Mycoplasma gallisepticum), this protein is Large ribosomal subunit protein uL15.